A 440-amino-acid polypeptide reads, in one-letter code: MAENSESNSKNVDVRPKTSRSRSADRKDGYVWSGKKLSWSKKSESCSDAETVSAIEKTEVPLRSQERKHSCSSIELDLDHSCGHRFLGRSLKQKLQDAVGQCFPIKNCSSRHSSGLPSKRKIHISELMLDKCPFPPRSDLAFRWHFIKRHTAPISPKSDEWVSTDLSQSELRDGQLKQRRNMEEVSCFSHTSVQPCVITSNNSSGRGGPGTDSIVNLASNNSIEDSDMDSDDEIITLCTSSRKRNKPKWEIDEEILQLETPPKYHTQIDYVHCLVPDLLQINNNPCYWGVMDKYAAEALLEGKPEGTFLLRDSAQEDYLFSVSFRRYSRSLHARIEQWNHNFSFDAHDPCVFHSPDITGLLEHYKDPSACMFFEPLLSTPLIRTFPFSLQHICRTVICNCTTYDGIDALPIPSSMKLYLKEYHYKSKVRVLRIDAPEQQC.

The segment covering 1–11 (MAENSESNSKN) has biased composition (polar residues). A disordered region spans residues 1–29 (MAENSESNSKNVDVRPKTSRSRSADRKDG). The span at 12–29 (VDVRPKTSRSRSADRKDG) shows a compositional bias: basic and acidic residues. Residues 286 to 381 (CYWGVMDKYA…FFEPLLSTPL (96 aa)) form the SH2 domain. An SOCS box domain is found at 376–425 (LLSTPLIRTFPFSLQHICRTVICNCTTYDGIDALPIPSSMKLYLKEYHYK).

It participates in protein modification; protein ubiquitination. Its function is as follows. SOCS family proteins form part of a classical negative feedback system that regulates cytokine signal transduction. Substrate-recognition component of a SCF-like ECS (Elongin BC-CUL2/5-SOCS-box protein) E3 ubiquitin-protein ligase complex which mediates the ubiquitination and subsequent proteasomal degradation of target proteins. Inhibits EGF signaling by mediating the degradation of the Tyr-phosphorylated EGF receptor/EGFR. This chain is Suppressor of cytokine signaling 4 (SOCS4), found in Bos taurus (Bovine).